Reading from the N-terminus, the 383-residue chain is Dual-specificity RNA methyltransferase RlmN (383 aa).

Glutamate 93 (proton acceptor) is an active-site residue. Residues 99 to 339 form the Radical SAM core domain; it reads EETRGTLCVS…TTIRKTRGDD (241 aa). A disulfide bridge connects residues cysteine 106 and cysteine 344. Residues cysteine 113, cysteine 117, and cysteine 120 each contribute to the [4Fe-4S] cluster site. S-adenosyl-L-methionine-binding positions include 170–171, serine 202, 224–226, and asparagine 301; these read GE and SLH. The active-site S-methylcysteine intermediate is cysteine 344.

The protein belongs to the radical SAM superfamily. RlmN family. It depends on [4Fe-4S] cluster as a cofactor.

The protein localises to the cytoplasm. The enzyme catalyses adenosine(2503) in 23S rRNA + 2 reduced [2Fe-2S]-[ferredoxin] + 2 S-adenosyl-L-methionine = 2-methyladenosine(2503) in 23S rRNA + 5'-deoxyadenosine + L-methionine + 2 oxidized [2Fe-2S]-[ferredoxin] + S-adenosyl-L-homocysteine. The catalysed reaction is adenosine(37) in tRNA + 2 reduced [2Fe-2S]-[ferredoxin] + 2 S-adenosyl-L-methionine = 2-methyladenosine(37) in tRNA + 5'-deoxyadenosine + L-methionine + 2 oxidized [2Fe-2S]-[ferredoxin] + S-adenosyl-L-homocysteine. Its function is as follows. Specifically methylates position 2 of adenine 2503 in 23S rRNA and position 2 of adenine 37 in tRNAs. m2A2503 modification seems to play a crucial role in the proofreading step occurring at the peptidyl transferase center and thus would serve to optimize ribosomal fidelity. This is Dual-specificity RNA methyltransferase RlmN from Ralstonia pickettii (strain 12J).